Consider the following 98-residue polypeptide: Keratinocyte differentiation-associated protein (98 aa).

The first 22 residues, 1 to 22, serve as a signal peptide directing secretion; the sequence is MKIPILPIVALLSLLALHAAQG.

In terms of tissue distribution, ubiquitously expressed in stratified epithelium.

The protein resides in the secreted. Its function is as follows. May act as a soluble regulator of keratinocyte differentiation. May play an important role in embryonic skin morphogenesis. This chain is Keratinocyte differentiation-associated protein, found in Rattus norvegicus (Rat).